A 437-amino-acid polypeptide reads, in one-letter code: MLRARKGLWVLLSVLLAFWIERAISFPVRHHKRSRNGVYVENQVQNHLADSHPHQRRWLQHHSTGVLPLPEPEEESKPFVLDFKNLPDLANADIGSQNPNIQVTIEVLDDPPMDVEMDLVKEWSNDWSTSSPSSTVEWLGGKKLFWPLFWGYTDADSGEDGTGQAEDEEDDYDYDSGEPIPSGLGKTDGDWTHNRYEEKEEEWSTWSPCSVTCGHGNQTRSRSCGDFCTSTESQSCDLVPCPDDWNSVGHVFPFEMENGTEPYGTDVGSCEKWLNCKSEFLQRYLQQVFTELPNCPCSYPSHVSNNIVSLLDVGHERSFQWRDASGPKERLDIYKPSARSCLRSGLSKNGTTLAAQHCCYDDNKQLITRGKGAGTPNLISTEFSPELHFKVDVLPWILCKGDWSRFHAVRPPNNGLHCMENPQQDIFMNELEEAREY.

Residues 1-25 (MLRARKGLWVLLSVLLAFWIERAIS) form the signal peptide. A disordered region spans residues 156-191 (DSGEDGTGQAEDEEDDYDYDSGEPIPSGLGKTDGDW). Acidic residues predominate over residues 165–176 (AEDEEDDYDYDS). The TSP type-1 domain maps to 197–242 (EEKEEEWSTWSPCSVTCGHGNQTRSRSCGDFCTSTESQSCDLVPCP). 3 disulfides stabilise this stretch: C209–C236, C213–C241, and C224–C228. A glycan (N-linked (GlcNAc...) asparagine) is linked at N217. N-linked (GlcNAc...) asparagine glycosylation is found at N258 and N349. The 164-residue stretch at 262–425 (PYGTDVGSCE…LHCMENPQQD (164 aa)) folds into the AMOP domain.

It belongs to the isthmin family.

It is found in the secreted. This is Isthmin-2 (ism2) from Danio rerio (Zebrafish).